We begin with the raw amino-acid sequence, 156 residues long: IFN signaling evasion protein OPG029 (156 aa).

This sequence belongs to the orthopoxvirus OPG029 family. As to quaternary structure, interacts with host TANK, TBKBP1 and AZI2; these interactions prevent interferon production. Interacts with host STAT2.

Functionally, prevents establishment of cellular antiviral state by blocking virus-induced phosphorylation and activation of interferon regulatory factors 3/IRF3 and 7/IRF7, transcription factors critical for the induction of interferons alpha and beta. This blockage is produced through the inhibition of host TBK1, by binding host TBK1 adapter proteins TBKBP1 and AZI2, thereby producing a strong inhibition of the phosphorylation and activation of IRF3 and IRF7. Also acts as an inhibitor of the cellular response to type I IFN by interacting with host STAT2. Mechanistically, exerts its inhibitory effect after host ISGF3 complex (composed of STAT1, STAT2 and IRF9) binding to the interferon stimulated response element (ISRE). The sequence is that of IFN signaling evasion protein OPG029 (OPG029) from Variola virus (isolate Human/India/Ind3/1967) (VARV).